We begin with the raw amino-acid sequence, 419 residues long: Ribosome biogenesis protein WDR12 homolog (419 aa).

A ubiquitin-like (UBL) domain region spans residues 10-91 (VQVHLKTKQE…EDAIEIEYVE (82 aa)). 7 WD repeats span residues 103–141 (LHDDWVSAVKASGKWILTGCYDNTLNIWTNKGKHILTIP), 142–184 (GHTA…NTVE), 191–230 (GHERGVDSVSVSPDGQRFATGSWDTMLKVWSAELEDAGEG), 249–287 (GHRESISAVQWMDASTLLTGSWDHTLKVWDLSLEGIKAE), 289–328 (STNKSIFDASYSKLNHLILTASADKNLRLYDSRTNQGSVV), 334–374 (GHNA…APLY), and 378–416 (GHGEKVLDIDWSNPKYIVSGGSDNTVRVFKSRKALVENM).

It belongs to the WD repeat WDR12/YTM1 family.

It localises to the nucleus. The protein localises to the nucleolus. The protein resides in the nucleoplasm. Required for maturation of ribosomal RNAs and formation of the large ribosomal subunit. This is Ribosome biogenesis protein WDR12 homolog from Drosophila pseudoobscura pseudoobscura (Fruit fly).